The primary structure comprises 338 residues: Methionine aminopeptidase 1D, mitochondrial (338 aa).

Residues methionine 1–arginine 47 constitute a mitochondrion transit peptide. Residue histidine 164 coordinates substrate. Aspartate 181, aspartate 192, and histidine 255 together coordinate a divalent metal cation. Histidine 262 contributes to the substrate binding site. 2 residues coordinate a divalent metal cation: glutamate 287 and glutamate 318.

The protein belongs to the peptidase M24A family. Methionine aminopeptidase type 1 subfamily. Requires Co(2+) as cofactor. It depends on Zn(2+) as a cofactor. Mn(2+) is required as a cofactor. The cofactor is Fe(2+).

Its subcellular location is the mitochondrion. It carries out the reaction Release of N-terminal amino acids, preferentially methionine, from peptides and arylamides.. Functionally, removes the N-terminal methionine from nascent proteins. The N-terminal methionine is often cleaved when the second residue in the primary sequence is small and uncharged (Met-Ala-, Cys, Gly, Pro, Ser, Thr, or Val). Requires deformylation of the N(alpha)-formylated initiator methionine before it can be hydrolyzed. In Danio rerio (Zebrafish), this protein is Methionine aminopeptidase 1D, mitochondrial (metap1d).